The sequence spans 332 residues: MSKKPIIGITMGDAAGVGPEIIIKSLRNRELYEQAHPIVIGDTKMLERAAKILDVDVSFDKKTKDEELMDTEFGKITCIDLDILPEDLAYGEVSPVSGNAAFEYLRMAIELANEGKIQAICTAPLNKEALQKGGHMYPGHTEILAELTNTEEFSMMLSSPKLKVIHVTTHVGLIQAIQMIKPERVHKVIQLAHETLSNSGIKNPKIGVCGINPHAGENGLFGNGEEEEKIIPAIQQAVKEGINVEGPLPADTLFFRAQRGDFDIVVAMYHDQGHGPIKVLGLEAGVNITVGLPIIRTSVDHGTAFDIAGKGIVDERSMLEALHQAIELAPTK.

Residues His-140 and Thr-141 each contribute to the substrate site. 3 residues coordinate a divalent metal cation: His-170, His-214, and His-270. Substrate is bound by residues Lys-278, Asn-287, and Arg-296.

The protein belongs to the PdxA family. PdxA2 subfamily. Homodimer. The cofactor is a divalent metal cation.

It catalyses the reaction 4-O-phospho-D-threonate + NAD(+) = dihydroxyacetone phosphate + CO2 + NADH. Its function is as follows. Catalyzes the NAD-dependent oxidation and subsequent decarboxylation of D-threonate 4-phosphate to produce dihydroxyacetone phosphate (DHAP). The polypeptide is Putative D-threonate 4-phosphate dehydrogenase (Oceanobacillus iheyensis (strain DSM 14371 / CIP 107618 / JCM 11309 / KCTC 3954 / HTE831)).